Reading from the N-terminus, the 226-residue chain is Charged multivesicular body protein 5 (226 aa).

A coiled-coil region spans residues 21–93 (IAGVDARATN…NQSFNMEQAN (73 aa)). Residues 188–198 (KAPEAPSREPG) show a composition bias toward basic and acidic residues. Residues 188 to 226 (KAPEAPSREPGADSIVPGKSTIETDEFGLPKIPTSLKTT) form a disordered region. Residue Ser-201 is modified to Phosphoserine. Thr-226 bears the Phosphothreonine mark.

The protein belongs to the SNF7 family. As to quaternary structure, probable peripherally associated component of the endosomal sorting required for transport complex III (ESCRT-III).

It localises to the endosome membrane. In terms of biological role, probable peripherally associated component of the endosomal sorting required for transport complex III (ESCRT-III) which is involved in multivesicular bodies (MVBs) formation and sorting of endosomal cargo proteins into MVBs. MVBs contain intraluminal vesicles (ILVs) that are generated by invagination and scission from the limiting membrane of the endosome and are delivered to lysosomes enabling degradation of membrane proteins. Specifically down-regulates Notch signaling activity in the germarium, probably by facilitating Notch endocytosis. The sequence is that of Charged multivesicular body protein 5 from Drosophila melanogaster (Fruit fly).